Here is a 139-residue protein sequence, read N- to C-terminus: Small integral membrane protein 34 (139 aa).

The chain crosses the membrane as a helical span at residues 46–66 (GTSAAWYILTIIGIYAVIFVF).

The protein localises to the membrane. In Homo sapiens (Human), this protein is Small integral membrane protein 34.